A 412-amino-acid polypeptide reads, in one-letter code: Propionate kinase (412 aa).

It belongs to the acetokinase family. PduW subfamily.

It localises to the cytoplasm. The enzyme catalyses propanoate + ATP = propanoyl phosphate + ADP. It participates in polyol metabolism; 1,2-propanediol degradation. Works with phosphate acetyltransferase (pta) to capture exogenous propionate and regenerate propionyl-CoA during degradation of 1,2-propanediol (1,2-PD). The sequence is that of Propionate kinase from Yersinia enterocolitica serotype O:8 / biotype 1B (strain NCTC 13174 / 8081).